A 145-amino-acid chain; its full sequence is Ribonuclease HI (145 aa).

The RNase H type-1 domain maps to Met1–Ala142. The Mg(2+) site is built by Asp10, Glu48, Asp70, and Asp134.

The protein belongs to the RNase H family. As to quaternary structure, monomer. The cofactor is Mg(2+).

The protein localises to the cytoplasm. It carries out the reaction Endonucleolytic cleavage to 5'-phosphomonoester.. Functionally, endonuclease that specifically degrades the RNA of RNA-DNA hybrids. The sequence is that of Ribonuclease HI from Neisseria meningitidis serogroup A / serotype 4A (strain DSM 15465 / Z2491).